The following is a 935-amino-acid chain: Dual 3',5'-cyclic-AMP and -GMP phosphodiesterase 11A (935 aa).

The interval 41–125 (RHSSGQGASD…ASQKELRKSF (85 aa)) is disordered. Positions 54 to 69 (ALAGASSLAQSSARGS) are enriched in low complexity. Phosphoserine is present on residues Ser-162, Ser-163, and Ser-239. GAF domains lie at 217–370 (DLTS…GIAI) and 402–558 (DLEK…GLGI). Ser-424 serves as a coordination point for 3',5'-cyclic GMP. Residues 588–912 (SKAEVDKFKA…RKWEELHQKR (325 aa)) enclose the PDEase domain. The active-site Proton donor is the His-664. Residues His-668, His-704, Asp-705, and Asp-816 each coordinate a divalent metal cation. The disordered stretch occupies residues 915-935 (VSAASPVPSSPSPAVAGEDRL).

It belongs to the cyclic nucleotide phosphodiesterase family. The cofactor is a divalent metal cation. As to expression, isoform 1 is expressed in brain, heart, kidney and liver, but not in prostate. Isoform 2 is specifically expressed in testis. Isoform 3 is expressed in various tissues including brain, lung, skeletal muscle, spleen, testis and prostate.

It localises to the cytoplasm. Its subcellular location is the cytosol. The enzyme catalyses 3',5'-cyclic GMP + H2O = GMP + H(+). It carries out the reaction 3',5'-cyclic AMP + H2O = AMP + H(+). With respect to regulation, inhibited by 3-isobutyl-1-methylxanthine (IBMX), zaprinast and dipyridamole. cGMP acts as an allosteric activator. Plays a role in signal transduction by regulating the intracellular concentration of cyclic nucleotides cAMP and cGMP. Catalyzes the hydrolysis of both cAMP and cGMP to 5'-AMP and 5'-GMP, respectively. The chain is Dual 3',5'-cyclic-AMP and -GMP phosphodiesterase 11A from Rattus norvegicus (Rat).